The following is a 236-amino-acid chain: 7-cyano-7-deazaguanine synthase 2 (236 aa).

Phenylalanine 11 to leucine 21 is a binding site for ATP. Positions 199, 214, 217, and 220 each coordinate Zn(2+).

This sequence belongs to the QueC family. Zn(2+) is required as a cofactor.

The enzyme catalyses 7-carboxy-7-deazaguanine + NH4(+) + ATP = 7-cyano-7-deazaguanine + ADP + phosphate + H2O + H(+). It participates in purine metabolism; 7-cyano-7-deazaguanine biosynthesis. In terms of biological role, catalyzes the ATP-dependent conversion of 7-carboxy-7-deazaguanine (CDG) to 7-cyano-7-deazaguanine (preQ(0)). This Sphingopyxis alaskensis (strain DSM 13593 / LMG 18877 / RB2256) (Sphingomonas alaskensis) protein is 7-cyano-7-deazaguanine synthase 2.